The following is a 319-amino-acid chain: Cobalamin biosynthesis protein CobD (319 aa).

The next 3 membrane-spanning stretches (helical) occupy residues 54-76 (VLLLLTVLLIVTALSLALVWLSY), 154-173 (GVTAPLFYALIGGAPLALLY), and 301-318 (VLGFLVFLFLLGGFIYAI).

The protein belongs to the CobD/CbiB family.

Its subcellular location is the cell membrane. Its pathway is cofactor biosynthesis; adenosylcobalamin biosynthesis. Its function is as follows. Converts cobyric acid to cobinamide by the addition of aminopropanol on the F carboxylic group. The protein is Cobalamin biosynthesis protein CobD of Halalkalibacterium halodurans (strain ATCC BAA-125 / DSM 18197 / FERM 7344 / JCM 9153 / C-125) (Bacillus halodurans).